The sequence spans 136 residues: Protein Tat (136 aa).

The interval 22–37 is cysteine-rich; the sequence is CTNCYCKKCCFHCPVC. Residues 38 to 48 form a core region; that stretch reads FTKKALGISYG. Residues 48-57 are compositionally biased toward basic residues; sequence GRKRRGRKSA. Residues 48–136 are disordered; it reads GRKRRGRKSA…SGSSGSACKH (89 aa). The short motif at 49–55 is the Nuclear localization signal, and RNA-binding (TAR) element; sequence RKRRGRK. Polar residues predominate over residues 58–73; sequence VHSTNNQDPVRQQSLP. Positions 104–120 are enriched in low complexity; sequence SSVSSGRTSGTSSSGYT. The segment covering 123 to 136 has biased composition (polar residues); sequence FKTSSGSSGSACKH.

The protein belongs to the lentiviruses Tat family. As to quaternary structure, interacts with host CCNT1. Associates with the P-TEFb complex composed at least of Tat, P-TEFb (CDK9 and CCNT1), TAR RNA, RNA Pol II. Interacts with CCNT2; the resulting complex is unable to bind to TAR RNA.

The protein localises to the host nucleus. It is found in the host nucleolus. In terms of biological role, transcriptional activator that increases RNA Pol II processivity, thereby increasing the level of full-length viral transcripts. Recognizes a hairpin structure at the 5'-LTR of the nascent viral mRNAs referred to as the transactivation responsive RNA element (TAR) and recruits the cyclin T1-CDK9 complex (P-TEFb complex) that will in turn hyperphosphorylate the RNA polymerase II to allow efficient elongation. The CDK9 component of P-TEFb and other Tat-activated kinases hyperphosphorylate the C-terminus of RNA Pol II that becomes stabilized and much more processive. Its function is as follows. Extracellular circulating Tat can be endocytosed by surrounding uninfected cells via the binding to several surface receptors. Endosomal low pH allows Tat to cross the endosome membrane to enter the cytosol and eventually further translocate into the nucleus, thereby inducing severe cell dysfunctions ranging from cell activation to cell death. Through. The protein is Protein Tat of Simian immunodeficiency virus (isolate TAN1) (SIV-cpz).